We begin with the raw amino-acid sequence, 337 residues long: ATP-dependent 6-phosphofructokinase (337 aa).

G11 serves as a coordination point for ATP. An ADP-binding site is contributed by 21 to 25 (RAVVR). ATP is bound by residues 72-73 (RY) and 102-105 (GDGS). Residue D103 coordinates Mg(2+). 125–127 (TID) lines the substrate pocket. D127 serves as the catalytic Proton acceptor. An ADP-binding site is contributed by R154. Substrate contacts are provided by residues R162 and 169–171 (MGR). Residues 185-187 (GAD), K212, and 214-216 (KNH) contribute to the ADP site. Substrate-binding positions include E223, R245, and 251–254 (HILR).

The protein belongs to the phosphofructokinase type A (PFKA) family. ATP-dependent PFK group I subfamily. Prokaryotic clade 'B1' sub-subfamily. As to quaternary structure, homotetramer. Requires Mg(2+) as cofactor.

It is found in the cytoplasm. The catalysed reaction is beta-D-fructose 6-phosphate + ATP = beta-D-fructose 1,6-bisphosphate + ADP + H(+). Its pathway is carbohydrate degradation; glycolysis; D-glyceraldehyde 3-phosphate and glycerone phosphate from D-glucose: step 3/4. Its activity is regulated as follows. Allosterically activated by ADP and other diphosphonucleosides, and allosterically inhibited by phosphoenolpyruvate. Its function is as follows. Catalyzes the phosphorylation of D-fructose 6-phosphate to fructose 1,6-bisphosphate by ATP, the first committing step of glycolysis. This Streptococcus pyogenes serotype M28 (strain MGAS6180) protein is ATP-dependent 6-phosphofructokinase.